Here is a 145-residue protein sequence, read N- to C-terminus: Bacilliredoxin SH1401 (145 aa).

The protein belongs to the bacilliredoxin family.

The polypeptide is Bacilliredoxin SH1401 (Staphylococcus haemolyticus (strain JCSC1435)).